A 243-amino-acid polypeptide reads, in one-letter code: MSDDTGEFTDGSTESPADADGAGRRRAVDNGLTERQRTILEVIRASVTSRGYPPSIREIGDAVGLTSTSSVAHQLRTLERKGYLRRDPNRPRAVDVRAADDPAAAAVVTTDVAGSDALPEPTFVPVLGRIAAGGPILAEEAVEDVFPLPRELVGEGSLFLLKVVGDSMVDAAICDGDWVVVRQQNVADNGDIVAAMIDGEATVKTFKRARGQVWLMPHNPAYDPIPGNEAAVLGKVVTVIRKI.

The interval 1–30 is disordered; it reads MSDDTGEFTDGSTESPADADGAGRRRAVDN. Residues 21 to 30 are compositionally biased toward basic and acidic residues; that stretch reads GAGRRRAVDN. Residues 56-76 constitute a DNA-binding region (H-T-H motif); the sequence is IREIGDAVGLTSTSSVAHQLR. Residues S167 and K204 each act as for autocatalytic cleavage activity in the active site.

This sequence belongs to the peptidase S24 family. As to quaternary structure, homodimer.

It carries out the reaction Hydrolysis of Ala-|-Gly bond in repressor LexA.. Functionally, represses a number of genes involved in the response to DNA damage (SOS response), including recA and lexA. In the presence of single-stranded DNA, RecA interacts with LexA causing an autocatalytic cleavage which disrupts the DNA-binding part of LexA, leading to derepression of the SOS regulon and eventually DNA repair. The sequence is that of LexA repressor from Mycolicibacterium smegmatis (strain ATCC 700084 / mc(2)155) (Mycobacterium smegmatis).